The chain runs to 615 residues: Probable methylmalonyl-CoA mutase small subunit (615 aa).

This sequence belongs to the methylmalonyl-CoA mutase family. As to quaternary structure, heterodimer of an alpha and a beta chain. Adenosylcob(III)alamin serves as cofactor.

The catalysed reaction is (R)-methylmalonyl-CoA = succinyl-CoA. Its pathway is metabolic intermediate metabolism; propanoyl-CoA degradation; succinyl-CoA from propanoyl-CoA: step 3/3. In terms of biological role, catalyzes the isomerization of succinyl-CoA to methylmalonyl-CoA during synthesis of propionate from tricarboxylic acid-cycle intermediates. This chain is Probable methylmalonyl-CoA mutase small subunit (mutA), found in Mycobacterium bovis (strain ATCC BAA-935 / AF2122/97).